A 365-amino-acid polypeptide reads, in one-letter code: Methionine import ATP-binding protein MetN (365 aa).

Residues 17 to 256 (IVFEHVTKEF…PQSETTQRFL (240 aa)) enclose the ABC transporter domain. Position 53 to 60 (53 to 60 (GHSGAGKS)) interacts with ATP. The disordered stretch occupies residues 346-365 (SNSAAPTTSATVPTPTEEAH).

This sequence belongs to the ABC transporter superfamily. Methionine importer (TC 3.A.1.24) family. As to quaternary structure, the complex is composed of two ATP-binding proteins (MetN), two transmembrane proteins (MetI) and a solute-binding protein (MetQ).

It is found in the cell membrane. The enzyme catalyses L-methionine(out) + ATP + H2O = L-methionine(in) + ADP + phosphate + H(+). It carries out the reaction D-methionine(out) + ATP + H2O = D-methionine(in) + ADP + phosphate + H(+). In terms of biological role, part of the ABC transporter complex MetNIQ involved in methionine import. Responsible for energy coupling to the transport system. This chain is Methionine import ATP-binding protein MetN, found in Cutibacterium acnes (strain DSM 16379 / KPA171202) (Propionibacterium acnes).